A 341-amino-acid polypeptide reads, in one-letter code: 4-hydroxythreonine-4-phosphate dehydrogenase (341 aa).

Threonine 126 lines the substrate pocket. The a divalent metal cation site is built by histidine 161, histidine 206, and histidine 272. Positions 280, 289, and 298 each coordinate substrate.

The protein belongs to the PdxA family. Homodimer. A divalent metal cation serves as cofactor.

The protein resides in the cytoplasm. The enzyme catalyses 4-(phosphooxy)-L-threonine + NAD(+) = 3-amino-2-oxopropyl phosphate + CO2 + NADH. It participates in cofactor biosynthesis; pyridoxine 5'-phosphate biosynthesis; pyridoxine 5'-phosphate from D-erythrose 4-phosphate: step 4/5. Its function is as follows. Catalyzes the NAD(P)-dependent oxidation of 4-(phosphooxy)-L-threonine (HTP) into 2-amino-3-oxo-4-(phosphooxy)butyric acid which spontaneously decarboxylates to form 3-amino-2-oxopropyl phosphate (AHAP). The polypeptide is 4-hydroxythreonine-4-phosphate dehydrogenase (Thermosynechococcus vestitus (strain NIES-2133 / IAM M-273 / BP-1)).